We begin with the raw amino-acid sequence, 284 residues long: ATP synthase gamma chain (284 aa).

The protein belongs to the ATPase gamma chain family. In terms of assembly, F-type ATPases have 2 components, CF(1) - the catalytic core - and CF(0) - the membrane proton channel. CF(1) has five subunits: alpha(3), beta(3), gamma(1), delta(1), epsilon(1). CF(0) has three main subunits: a, b and c.

It is found in the cell membrane. Functionally, produces ATP from ADP in the presence of a proton gradient across the membrane. The gamma chain is believed to be important in regulating ATPase activity and the flow of protons through the CF(0) complex. This chain is ATP synthase gamma chain, found in Bacillus licheniformis (strain ATCC 14580 / DSM 13 / JCM 2505 / CCUG 7422 / NBRC 12200 / NCIMB 9375 / NCTC 10341 / NRRL NRS-1264 / Gibson 46).